A 548-amino-acid chain; its full sequence is pH-responsive protein 1 (548 aa).

The N-terminal stretch at Met-1–Ala-20 is a signal peptide. An N-linked (GlcNAc...) asparagine glycan is attached at Asn-41. A disulfide bridge links Cys-82 with Cys-111. Residues Asn-173 and Asn-261 are each glycosylated (N-linked (GlcNAc...) asparagine). 5 disulfides stabilise this stretch: Cys-224–Cys-358, Cys-242–Cys-273, Cys-381–Cys-432, Cys-390–Cys-456, and Cys-409–Cys-414. The segment at Gly-483–Gly-518 is disordered. Ser-517 carries the GPI-anchor amidated serine lipid modification. A propeptide spans Gly-518–Phe-548 (removed in mature form).

This sequence belongs to the glycosyl hydrolase 72 family.

It is found in the cell membrane. Its function is as follows. Required for apical cell growth and plays an essential role in morphogenesis. May be integral to the pathogenic ability of the organism. This is pH-responsive protein 1 (PHR1) from Candida albicans (strain SC5314 / ATCC MYA-2876) (Yeast).